The chain runs to 33 residues: MPRRRRSSRRPVRRRRRPRVSRRRRRRGGRRRR.

The interval 1 to 33 is disordered; that stretch reads MPRRRRSSRRPVRRRRRPRVSRRRRRRGGRRRR.

As to expression, testis.

It is found in the nucleus. The protein resides in the chromosome. Functionally, protamines substitute for histones in the chromatin of sperm during the haploid phase of spermatogenesis. They compact sperm DNA into a highly condensed, stable and inactive complex. The polypeptide is Protamine-2C (Oncorhynchus mykiss (Rainbow trout)).